Reading from the N-terminus, the 487-residue chain is Argininosuccinate lyase (487 aa).

It belongs to the lyase 1 family. Argininosuccinate lyase subfamily.

The protein resides in the cytoplasm. The enzyme catalyses 2-(N(omega)-L-arginino)succinate = fumarate + L-arginine. The protein operates within amino-acid biosynthesis; L-arginine biosynthesis; L-arginine from L-ornithine and carbamoyl phosphate: step 3/3. This Methanococcus aeolicus (strain ATCC BAA-1280 / DSM 17508 / OCM 812 / Nankai-3) protein is Argininosuccinate lyase.